The following is a 137-amino-acid chain: MLSPKKVKFRKQQRGRRTGTRLAGSTLSFGEFGLQATECGMITARQIEAARIAMTRYIKRAGKTWIRIFPDKPFTKKPAEVRMGKGKGAPEGWAAVIRPGRILYEMDGVPDELAREAFRLAAHKLPVKTKFVKRETA.

The span at 1 to 19 (MLSPKKVKFRKQQRGRRTG) shows a compositional bias: basic residues. The interval 1–20 (MLSPKKVKFRKQQRGRRTGT) is disordered.

The protein belongs to the universal ribosomal protein uL16 family. As to quaternary structure, part of the 50S ribosomal subunit.

Its function is as follows. Binds 23S rRNA and is also seen to make contacts with the A and possibly P site tRNAs. This Desulfosudis oleivorans (strain DSM 6200 / JCM 39069 / Hxd3) (Desulfococcus oleovorans) protein is Large ribosomal subunit protein uL16.